Reading from the N-terminus, the 150-residue chain is Macrodomain Ter protein (150 aa).

This sequence belongs to the MatP family. In terms of assembly, homodimer.

Its subcellular location is the cytoplasm. Its function is as follows. Required for spatial organization of the terminus region of the chromosome (Ter macrodomain) during the cell cycle. Prevents early segregation of duplicated Ter macrodomains during cell division. Binds specifically to matS, which is a 13 bp signature motif repeated within the Ter macrodomain. In Escherichia coli O6:K15:H31 (strain 536 / UPEC), this protein is Macrodomain Ter protein.